We begin with the raw amino-acid sequence, 279 residues long: Thymidylate synthase (279 aa).

Position 141–142 (141–142 (RR)) interacts with dUMP. The active-site Nucleophile is the Cys-161. DUMP-binding positions include 181 to 184 (RSND), Asn-192, and 222 to 224 (HIY). Residue Asp-184 coordinates (6R)-5,10-methylene-5,6,7,8-tetrahydrofolate. (6R)-5,10-methylene-5,6,7,8-tetrahydrofolate is bound at residue Ala-278.

The protein belongs to the thymidylate synthase family. Bacterial-type ThyA subfamily. In terms of assembly, homodimer.

It is found in the cytoplasm. It catalyses the reaction dUMP + (6R)-5,10-methylene-5,6,7,8-tetrahydrofolate = 7,8-dihydrofolate + dTMP. The protein operates within pyrimidine metabolism; dTTP biosynthesis. Its function is as follows. Catalyzes the reductive methylation of 2'-deoxyuridine-5'-monophosphate (dUMP) to 2'-deoxythymidine-5'-monophosphate (dTMP) while utilizing 5,10-methylenetetrahydrofolate (mTHF) as the methyl donor and reductant in the reaction, yielding dihydrofolate (DHF) as a by-product. This enzymatic reaction provides an intracellular de novo source of dTMP, an essential precursor for DNA biosynthesis. The protein is Thymidylate synthase of Bacillus licheniformis (strain ATCC 14580 / DSM 13 / JCM 2505 / CCUG 7422 / NBRC 12200 / NCIMB 9375 / NCTC 10341 / NRRL NRS-1264 / Gibson 46).